A 132-amino-acid polypeptide reads, in one-letter code: Guanyl-specific ribonuclease C2 (132 aa).

An N-terminal signal peptide occupies residues 1–26 (MLYNKLITIAALLVPALAAPQGLDVR). Cystine bridges form between Cys-28–Cys-36 and Cys-32–Cys-129. Residue His-66 is part of the active site. The active-site Proton acceptor is Glu-84. The Proton donor role is filled by His-118.

It belongs to the ribonuclease N1/T1 family.

It is found in the secreted. The enzyme catalyses [RNA] containing guanosine + H2O = an [RNA fragment]-3'-guanosine-3'-phosphate + a 5'-hydroxy-ribonucleotide-3'-[RNA fragment].. The chain is Guanyl-specific ribonuclease C2 from Aspergillus clavatus (strain ATCC 1007 / CBS 513.65 / DSM 816 / NCTC 3887 / NRRL 1 / QM 1276 / 107).